Here is a 293-residue protein sequence, read N- to C-terminus: Ribosomal protein L11 methyltransferase (293 aa).

Positions 145, 166, 188, and 230 each coordinate S-adenosyl-L-methionine.

This sequence belongs to the methyltransferase superfamily. PrmA family.

The protein resides in the cytoplasm. It carries out the reaction L-lysyl-[protein] + 3 S-adenosyl-L-methionine = N(6),N(6),N(6)-trimethyl-L-lysyl-[protein] + 3 S-adenosyl-L-homocysteine + 3 H(+). Methylates ribosomal protein L11. The chain is Ribosomal protein L11 methyltransferase from Shewanella baltica (strain OS185).